We begin with the raw amino-acid sequence, 104 residues long: Iron-sulfur cluster assembly protein CyaY (104 aa).

The protein belongs to the frataxin family.

Functionally, involved in iron-sulfur (Fe-S) cluster assembly. May act as a regulator of Fe-S biogenesis. The sequence is that of Iron-sulfur cluster assembly protein CyaY from Rickettsia prowazekii (strain Madrid E).